A 370-amino-acid polypeptide reads, in one-letter code: DNA repair protein RAD51 homolog 2 (370 aa).

Position 109 to 116 (109 to 116 (GPPGIGKS)) interacts with ATP.

This sequence belongs to the RecA family. RAD51 subfamily. As to expression, preferentially expressed in flower buds and roots.

The protein localises to the nucleus. Functionally, may be involved in the homologous recombination repair (HRR) pathway of double-stranded DNA breaks arising during DNA replication or induced by DNA-damaging agents. The protein is DNA repair protein RAD51 homolog 2 (RAD51B) of Arabidopsis thaliana (Mouse-ear cress).